We begin with the raw amino-acid sequence, 199 residues long: Recombination protein RecR (199 aa).

Residues 57-72 (CSICGNITDEDPCAIC) form a C4-type zinc finger. A Toprim domain is found at 80-176 (STILVVEQPK…KVTRLAHGLS (97 aa)).

The protein belongs to the RecR family.

In terms of biological role, may play a role in DNA repair. It seems to be involved in an RecBC-independent recombinational process of DNA repair. It may act with RecF and RecO. The polypeptide is Recombination protein RecR (Lacticaseibacillus casei (strain BL23) (Lactobacillus casei)).